Reading from the N-terminus, the 318-residue chain is uncharacterized protein (318 aa).

The segment covering 1 to 22 (MKASQERSEARRTAHSVKEKKY) has biased composition (basic and acidic residues). 2 disordered regions span residues 1–29 (MKAS…ASPR) and 293–318 (DDGD…DDDE).

This is an uncharacterized protein from Ictalurid herpesvirus 1 (strain Auburn) (IcHV-1).